A 610-amino-acid polypeptide reads, in one-letter code: UvrABC system protein C (610 aa).

The region spanning 16-94 is the GIY-YIG domain; sequence SQPGVYRMYD…IKLYQPRYNV (79 aa). Residues 204-239 enclose the UVR domain; it reads DQVLTQLIARMEKASQDLAFEEAARIRDQIQAVRRV.

It belongs to the UvrC family. As to quaternary structure, interacts with UvrB in an incision complex.

Its subcellular location is the cytoplasm. Its function is as follows. The UvrABC repair system catalyzes the recognition and processing of DNA lesions. UvrC both incises the 5' and 3' sides of the lesion. The N-terminal half is responsible for the 3' incision and the C-terminal half is responsible for the 5' incision. The chain is UvrABC system protein C from Salmonella typhimurium (strain LT2 / SGSC1412 / ATCC 700720).